The sequence spans 382 residues: GDSL esterase/lipase At4g01130 (382 aa).

The first 28 residues, 1-28 (MASDINRRRSFSLLVLIIVMLYGHKGDS), serve as a signal peptide directing secretion. S41 functions as the Nucleophile in the catalytic mechanism. N-linked (GlcNAc...) asparagine glycans are attached at residues N118, N263, N275, and N330. Active-site residues include D348 and H351.

This sequence belongs to the 'GDSL' lipolytic enzyme family.

It is found in the secreted. The polypeptide is GDSL esterase/lipase At4g01130 (Arabidopsis thaliana (Mouse-ear cress)).